The chain runs to 158 residues: Small ribosomal subunit protein uS19 (158 aa).

This sequence belongs to the universal ribosomal protein uS19 family.

Protein S19 forms a complex with S13 that binds strongly to the 16S ribosomal RNA. The polypeptide is Small ribosomal subunit protein uS19 (Pyrobaculum aerophilum (strain ATCC 51768 / DSM 7523 / JCM 9630 / CIP 104966 / NBRC 100827 / IM2)).